Reading from the N-terminus, the 186-residue chain is Intraflagellar transport protein 27 homolog (186 aa).

GTP-binding positions include 12–19, 64–68, and 123–126; these read GDPAVGKT, DSAGK, and NKTD.

Belongs to the small GTPase superfamily. Rab family. As to quaternary structure, component of the IFT complex B, at least composed of IFT20, IFT25, IFT27, IFT52, IFT57, IFT74, IFT81, IFT88 and TRAF3IP1. Interacts with IFT25. Interacts with IFT70B. Interacts with RABL2/RABL2A; binding is equal in the presence of GTP or GDP. Interacts with ARL6; recognizes and binds with the GTP-free form of ARL6.

The protein resides in the cell projection. It localises to the cilium. It is found in the cytoplasm. The protein localises to the flagellum. Small GTPase-like component of the intraflagellar transport (IFT) complex B that promotes the exit of the BBSome complex from cilia via its interaction with ARL6. Not involved in entry of the BBSome complex into cilium. Prevents aggregation of GTP-free ARL6. Required for hedgehog signaling. Forms a subcomplex within the IFT complex B with IFT25. Its role in intraflagellar transport is mainly seen in tissues rich in ciliated cells such as kidney and testis. Essential for male fertility, spermiogenesis and sperm flagella formation. Plays a role in the early development of the kidney. May be involved in the regulation of ureteric bud initiation. The polypeptide is Intraflagellar transport protein 27 homolog (IFT27) (Homo sapiens (Human)).